The following is a 328-amino-acid chain: Glucan endo-1,3-beta-glucosidase, basic isoform 3 (328 aa).

The active-site Proton donor is the Glu-85. Residue Glu-230 is the Nucleophile of the active site. The propeptide at 306 to 328 (VSERVWDISAETNSTTSSLISEM) is removed in mature form. A glycan (N-linked (GlcNAc...) asparagine) is linked at Asn-318.

The protein belongs to the glycosyl hydrolase 17 family.

Its subcellular location is the vacuole. The enzyme catalyses Hydrolysis of (1-&gt;3)-beta-D-glucosidic linkages in (1-&gt;3)-beta-D-glucans.. In terms of biological role, is thought to be an important plant defense-related product against fungal pathogens. This is Glucan endo-1,3-beta-glucosidase, basic isoform 3 (GLUB3) from Solanum tuberosum (Potato).